A 72-amino-acid chain; its full sequence is Putative D-serine transporter DsdX-like protein (72 aa).

This is Putative D-serine transporter DsdX-like protein (dsdX) from Escherichia coli O157:H7.